The following is a 357-amino-acid chain: Naringenin,2-oxoglutarate 3-dioxygenase (357 aa).

Residues 189-293 (CVDMDQKIVV…RLSIATFQNP (105 aa)) enclose the Fe2OG dioxygenase domain. Residues His216, Asp218, and His274 each contribute to the Fe cation site. 2-oxoglutarate is bound at residue Arg284.

It belongs to the iron/ascorbate-dependent oxidoreductase family. Requires Fe(2+) as cofactor. L-ascorbate is required as a cofactor.

The catalysed reaction is a (2S)-flavan-4-one + 2-oxoglutarate + O2 = a (2R,3R)-dihydroflavonol + succinate + CO2. Its pathway is secondary metabolite biosynthesis; flavonoid biosynthesis. Functionally, catalyzes the 3-beta-hydroxylation of 2S-flavanones to 2R,3R-dihydroflavonols which are intermediates in the biosynthesis of flavonols, anthocyanidins, catechins and proanthocyanidins in plants. This is Naringenin,2-oxoglutarate 3-dioxygenase (FHT) from Matthiola incana (Common stock).